The chain runs to 397 residues: Arginine biosynthesis bifunctional protein ArgJ (397 aa).

Residues threonine 147, lysine 173, threonine 184, glutamate 270, asparagine 392, and threonine 397 each coordinate substrate. Threonine 184 acts as the Nucleophile in catalysis.

It belongs to the ArgJ family. As to quaternary structure, heterotetramer of two alpha and two beta chains.

The protein resides in the cytoplasm. It carries out the reaction N(2)-acetyl-L-ornithine + L-glutamate = N-acetyl-L-glutamate + L-ornithine. It catalyses the reaction L-glutamate + acetyl-CoA = N-acetyl-L-glutamate + CoA + H(+). Its pathway is amino-acid biosynthesis; L-arginine biosynthesis; L-ornithine and N-acetyl-L-glutamate from L-glutamate and N(2)-acetyl-L-ornithine (cyclic): step 1/1. It functions in the pathway amino-acid biosynthesis; L-arginine biosynthesis; N(2)-acetyl-L-ornithine from L-glutamate: step 1/4. In terms of biological role, catalyzes two activities which are involved in the cyclic version of arginine biosynthesis: the synthesis of N-acetylglutamate from glutamate and acetyl-CoA as the acetyl donor, and of ornithine by transacetylation between N(2)-acetylornithine and glutamate. This Streptococcus thermophilus (strain ATCC BAA-250 / LMG 18311) protein is Arginine biosynthesis bifunctional protein ArgJ.